The sequence spans 130 residues: UPF0251 protein Mevan_1492 (130 aa).

It belongs to the UPF0251 family.

The sequence is that of UPF0251 protein Mevan_1492 from Methanococcus vannielii (strain ATCC 35089 / DSM 1224 / JCM 13029 / OCM 148 / SB).